The sequence spans 470 residues: Cannabinoid receptor 1 (470 aa).

Residues 1 to 121 (MKSILDGLAD…TPSQQLVIAA (121 aa)) lie on the Extracellular side of the membrane. The interval 2-23 (KSILDGLADTTFRTITTDLLYL) is required for mitochondrial localization. Asn78 and Asn84 each carry an N-linked (GlcNAc...) asparagine glycan. The helical transmembrane segment at 122-142 (LSIILGTFTVLENMLVLVVIV) threads the bilayer. The Cytoplasmic portion of the chain corresponds to 143–154 (QSRSLRCRPSYH). The helical transmembrane segment at 155 to 175 (FIGSLAVADLLGSVIFVYSFV) threads the bilayer. Residues 176–187 (DFHVFHRKDSPN) lie on the Extracellular side of the membrane. A helical transmembrane segment spans residues 188-208 (VFLFKLGGVTASFTASVGSLF). Residues 209–232 (LTAIDRYISIHRPMSYKRIVTRTK) are Cytoplasmic-facing. Residues 233-253 (AVIAFCMMWTIAIVIAVLPLF) form a helical membrane-spanning segment. Residues 254 to 277 (GWNCIKLRSVCSDIFPLIDETYLM) lie on the Extracellular side of the membrane. Residues 278 to 298 (FWIGVTSVLLLFIVYAYMYIL) traverse the membrane as a helical segment. Topologically, residues 299–344 (WKAHNHAVRMLQRGTQKSIIVHTSEDGKVHITRPDQTRMDIRLAKT) are cytoplasmic. The chain crosses the membrane as a helical span at residues 345–365 (LVLILVVLIICWGPLMAIMVY). Topologically, residues 366-377 (DVFGKINKTIKT) are extracellular. The N-linked (GlcNAc...) asparagine glycan is linked to Asn372. Residues 378 to 398 (VFAFCSVLCLLNSTVNPIIYA) traverse the membrane as a helical segment. At 399–470 (LRSKDLRNAF…VSTDTSAEAV (72 aa)) the chain is on the cytoplasmic side. The S-palmitoyl cysteine moiety is linked to residue Cys415.

The protein belongs to the G-protein coupled receptor 1 family. Palmitoylation at Cys-415 is important for recruitment at both plasma membrane and lipid rafts and association with G protein alpha subunits. In terms of tissue distribution, expressed in neurons, especially in the olfactory bulbs, telencephalic pallium, and hypothalamus and also in the midbrain and hindbrain (in the mesencephalic tegmentum and dorsolateral rhombencephalon). Expressed also in the spinal cord.

The protein localises to the cell membrane. The protein resides in the mitochondrion outer membrane. It localises to the cell projection. Its subcellular location is the axon. It is found in the presynapse. G-protein coupled receptor for cannabinoids. Mediates many cannabinoid-induced effects in the central nervous system (CNS), as well as in peripheral tissues. Regulates cellular respiration and energy production in response to cannabinoids. Signaling typically involves reduction in cyclic AMP. The protein is Cannabinoid receptor 1 (cnr1) of Xenopus laevis (African clawed frog).